The chain runs to 207 residues: ATP-dependent dethiobiotin synthetase BioD (207 aa).

13–18 (EVGKTV) is an ATP binding site. Residue T17 coordinates Mg(2+). K33 is an active-site residue. ATP-binding positions include D44 and 100–103 (EGAG). Mg(2+) contacts are provided by D44 and E100.

The protein belongs to the dethiobiotin synthetase family. Homodimer. Requires Mg(2+) as cofactor.

The protein localises to the cytoplasm. The catalysed reaction is (7R,8S)-7,8-diammoniononanoate + CO2 + ATP = (4R,5S)-dethiobiotin + ADP + phosphate + 3 H(+). It functions in the pathway cofactor biosynthesis; biotin biosynthesis; biotin from 7,8-diaminononanoate: step 1/2. Its function is as follows. Catalyzes a mechanistically unusual reaction, the ATP-dependent insertion of CO2 between the N7 and N8 nitrogen atoms of 7,8-diaminopelargonic acid (DAPA, also called 7,8-diammoniononanoate) to form a ureido ring. This chain is ATP-dependent dethiobiotin synthetase BioD, found in Christiangramia forsetii (strain DSM 17595 / CGMCC 1.15422 / KT0803) (Gramella forsetii).